Consider the following 270-residue polypeptide: Formamidopyrimidine-DNA glycosylase (270 aa).

Catalysis depends on Pro-2, which acts as the Schiff-base intermediate with DNA. Glu-3 acts as the Proton donor in catalysis. Lys-57 serves as the catalytic Proton donor; for beta-elimination activity. DNA-binding residues include His-90, Arg-109, and Lys-150. An FPG-type zinc finger spans residues 235–269 (QIYGKKGCPCPKCGQKIESFTVGQRNSYVCLHCQK). Arg-259 acts as the Proton donor; for delta-elimination activity in catalysis.

The protein belongs to the FPG family. In terms of assembly, monomer. Zn(2+) serves as cofactor.

The catalysed reaction is Hydrolysis of DNA containing ring-opened 7-methylguanine residues, releasing 2,6-diamino-4-hydroxy-5-(N-methyl)formamidopyrimidine.. It carries out the reaction 2'-deoxyribonucleotide-(2'-deoxyribose 5'-phosphate)-2'-deoxyribonucleotide-DNA = a 3'-end 2'-deoxyribonucleotide-(2,3-dehydro-2,3-deoxyribose 5'-phosphate)-DNA + a 5'-end 5'-phospho-2'-deoxyribonucleoside-DNA + H(+). Its function is as follows. Involved in base excision repair of DNA damaged by oxidation or by mutagenic agents. Acts as a DNA glycosylase that recognizes and removes damaged bases. Has a preference for oxidized purines, such as 7,8-dihydro-8-oxoguanine (8-oxoG). Has AP (apurinic/apyrimidinic) lyase activity and introduces nicks in the DNA strand. Cleaves the DNA backbone by beta-delta elimination to generate a single-strand break at the site of the removed base with both 3'- and 5'-phosphates. This is Formamidopyrimidine-DNA glycosylase from Actinobacillus succinogenes (strain ATCC 55618 / DSM 22257 / CCUG 43843 / 130Z).